Reading from the N-terminus, the 988-residue chain is MVPFWTVVTDQHIKYTSHNKAGFIIDEEQHHWPPSSGSSLGRAPSIPLSSSNPRSPIRPSTPSRVSTDWTRPPAPSVAYEARDINGSPRLEPHHHNMEEVLEGLCHRAALFGQGGCGRNDNPNARAGVGKRCLCRSLLDNAGQRPKGKLEIGTFVHDCLDLYGRWCHYQSEVESLWPSAGRKTRYARPSRSTNDQEGGYVDQWRADSRMYIPTILHSFLPRRDEREFTHMRYTAVTCDPDDFVVKGYKLRQNIGPTMRETELFICVTMYNEDEIEFTRTMHGIMRNIAHFCSRTRSRTWGKDGWQKIVVCVIADGRQKVHPRTLNALAAMGVYQDGIAKNVVNQKEVTAHVYEYTTQVSLDETLKFKGAEKGIVPCQMIFCLKEKNKKKLNSHRWFFNAFGRALIPNVCILLDVGTKPDSKALYHLWKAFDQNSNVAGAAGEIKADKGKGWLGLLNPLVASQNFEYKISNILDKPLESVFGYITVLPGALSAYRYHALQNDPSGHGPLSQYFKGETLHGRDADVFTANMYLAEDRILCWELVAKRDEQWVLKFVKSAYGETDVPDTVPEFISQRRRWLNGAFFAAVYALVHFKQIWRTDHSLTRKILLHIEFIYQFISLLFTFFSLANFYLTFYFVAGSLADPTIDPFGHNIGKYIFVILRYVCVLLICLQFILSLGNRPQGEEIVSEYHGDVFHHHGIHDLCLRVYCHQATYDARSRKDRPQQSYKLGNNIFTNLIVSSVSTIGLFFLMSFLYLDPWHMFTSSAQYFALLPSYICTLQVYAFCNTHDVTWGTKGDNVMHTDLGAAKAIGSGNTVEVEMPSEQLDIDSAYDVALRNLRDRVEVPKPPVSENQLQEDYYKSVRTYVVASYMVCNAILAMAVSEAYPVGSHIGSNFYLTFILWSVAALALFRAIGSSAFGVINIVSAIAEGRIQAKFERIFGGGDERGRHRAGLGSGFSESGKTGITSGSGMSGMSLSDVTSKISEKLAG.

Residues 29–75 (QHHWPPSSGSSLGRAPSIPLSSSNPRSPIRPSTPSRVSTDWTRPPAP) are disordered. The segment covering 44–66 (PSIPLSSSNPRSPIRPSTPSRVS) has biased composition (low complexity). 7 consecutive transmembrane segments (helical) span residues 577 to 596 (WLNGAFFAAVYALVHFKQIW), 616 to 636 (FISLLFTFFSLANFYLTFYFV), 656 to 676 (IFVILRYVCVLLICLQFILSL), 732 to 752 (IFTNLIVSSVSTIGLFFLMSF), 764 to 784 (SAQYFALLPSYICTLQVYAFC), 864 to 884 (YVVASYMVCNAILAMAVSEAY), and 911 to 931 (AIGSSAFGVINIVSAIAEGRI). The disordered stretch occupies residues 950 to 988 (AGLGSGFSESGKTGITSGSGMSGMSLSDVTSKISEKLAG). A compositionally biased stretch (low complexity) spans 957–976 (SESGKTGITSGSGMSGMSLS).

The protein belongs to the chitin synthase family. Class II subfamily.

Its subcellular location is the cell membrane. It catalyses the reaction [(1-&gt;4)-N-acetyl-beta-D-glucosaminyl](n) + UDP-N-acetyl-alpha-D-glucosamine = [(1-&gt;4)-N-acetyl-beta-D-glucosaminyl](n+1) + UDP + H(+). In terms of biological role, polymerizes chitin, a structural polymer of the cell wall and septum, by transferring the sugar moiety of UDP-GlcNAc to the non-reducing end of the growing chitin polymer. CHS1 mainly responsible for normal yeast cell reproductive growth. The protein is Chitin synthase 1 of Exophiala dermatitidis (Black yeast-like fungus).